The primary structure comprises 145 residues: Phospholipase A2, membrane associated (145 aa).

The signal sequence occupies residues 1–20; it reads MKLLLLLLVVMASDLPQAHG. 7 disulfides stabilise this stretch: cysteine 46–cysteine 138, cysteine 48–cysteine 64, cysteine 63–cysteine 118, cysteine 69–cysteine 145, cysteine 70–cysteine 111, cysteine 79–cysteine 104, and cysteine 97–cysteine 109. Residues histidine 47, glycine 49, and glycine 51 each contribute to the Ca(2+) site. The active site involves histidine 67. Aspartate 68 is a binding site for Ca(2+). Aspartate 112 is a catalytic residue.

It belongs to the phospholipase A2 family. Ca(2+) serves as cofactor. Alveolar macrophages, and at much lower levels in peripheral blood monocytes and peritoneal macrophages.

It localises to the secreted. It is found in the cell membrane. The protein resides in the mitochondrion outer membrane. It carries out the reaction a 1,2-diacyl-sn-glycero-3-phosphoethanolamine + H2O = a 1-acyl-sn-glycero-3-phosphoethanolamine + a fatty acid + H(+). The catalysed reaction is 1-hexadecanoyl-2-(9Z-octadecenoyl)-sn-glycero-3-phosphoethanolamine + H2O = 1-hexadecanoyl-sn-glycero-3-phosphoethanolamine + (9Z)-octadecenoate + H(+). It catalyses the reaction 1-hexadecanoyl-2-(9Z,12Z-octadecadienoyl)-sn-glycero-3-phosphoethanolamine + H2O = 1-hexadecanoyl-sn-glycero-3-phosphoethanolamine + (9Z,12Z)-octadecadienoate + H(+). The enzyme catalyses 1-hexadecanoyl-2-(5Z,8Z,11Z,14Z-eicosatetraenoyl)-sn-glycero-3-phosphoethanolamine + H2O = 1-hexadecanoyl-sn-glycero-3-phosphoethanolamine + (5Z,8Z,11Z,14Z)-eicosatetraenoate + H(+). It carries out the reaction N-hexadecanoyl-1,2-di-(9Z-octadecenoyl)-sn-glycero-3-phosphoethanolamine + H2O = N-hexadecanoyl-1-(9Z-octadecenoyl)-sn-glycero-3-phosphoethanolamine + (9Z)-octadecenoate + H(+). The catalysed reaction is 1,2-dihexadecanoyl-sn-glycero-3-phospho-(1'-sn-glycerol) + H2O = 1-hexadecanoyl-sn-glycero-3-phospho-(1'-sn-glycerol) + hexadecanoate + H(+). It catalyses the reaction 1-hexadecanoyl-2-(9Z-octadecenoyl)-sn-glycero-3-phosphoglycerol + H2O = 1-hexadecanoyl-sn-glycero-3-phosphoglycerol + (9Z)-octadecenoate + H(+). The enzyme catalyses 1-hexadecanoyl-2-(9Z-octadecenoyl)-sn-glycero-3-phospho-(1'-sn-glycerol) + H2O = 1-hexadecanoyl-sn-glycero-3-phospho-(1'-sn-glycerol) + (9Z)-octadecenoate + H(+). It carries out the reaction a 1,2-diacyl-sn-glycero-3-phosphocholine + H2O = a 1-acyl-sn-glycero-3-phosphocholine + a fatty acid + H(+). The catalysed reaction is 1,2-dihexadecanoyl-sn-glycero-3-phosphocholine + H2O = 1-hexadecanoyl-sn-glycero-3-phosphocholine + hexadecanoate + H(+). It catalyses the reaction 1-hexadecanoyl-2-(9Z-octadecenoyl)-sn-glycero-3-phosphocholine + H2O = 1-hexadecanoyl-sn-glycero-3-phosphocholine + (9Z)-octadecenoate + H(+). The enzyme catalyses 1-hexadecanoyl-2-(9Z,12Z-octadecadienoyl)-sn-glycero-3-phosphocholine + H2O = (9Z,12Z)-octadecadienoate + 1-hexadecanoyl-sn-glycero-3-phosphocholine + H(+). It carries out the reaction 1-hexadecanoyl-2-(4Z,7Z,10Z,13Z,16Z,19Z-docosahexaenoyl)-sn-glycero-3-phosphocholine + H2O = (4Z,7Z,10Z,13Z,16Z,19Z)-docosahexaenoate + 1-hexadecanoyl-sn-glycero-3-phosphocholine + H(+). Its function is as follows. Secretory calcium-dependent phospholipase A2 that primarily targets extracellular phospholipids with implications in host antimicrobial defense, inflammatory response and tissue regeneration. Hydrolyzes the ester bond of the fatty acyl group attached at sn-2 position of phospholipids (phospholipase A2 activity) with preference for phosphatidylethanolamines and phosphatidylglycerols over phosphatidylcholines. Contributes to lipid remodeling of cellular membranes and generation of lipid mediators involved in pathogen clearance. Displays bactericidal activity against Gram-positive bacteria by directly hydrolyzing phospholipids of the bacterial membrane. Upon sterile inflammation, targets membrane phospholipids of extracellular mitochondria released from activated platelets, generating free unsaturated fatty acids such as arachidonate that is used by neighboring leukocytes to synthesize inflammatory eicosanoids such as leukotrienes. Simultaneously, by compromising mitochondrial membrane integrity, promotes the release in circulation of potent damage-associated molecular pattern molecules that activate the innate immune response. Plays a stem cell regulator role in the intestinal crypt. Within intracellular compartment mediates Paneth cell differentiation and its stem cell supporting functions by inhibiting Wnt signaling pathway in intestinal stem cell (ICS). Secreted in the intestinal lumen upon inflammation, acts in an autocrine way and promotes prostaglandin E2 synthesis that stimulates Wnt signaling pathway in ICS cells and tissue regeneration. May play a role in the biosynthesis of N-acyl ethanolamines that regulate energy metabolism and inflammation. Hydrolyzes N-acyl phosphatidylethanolamines to N-acyl lysophosphatidylethanolamines, which are further cleaved by a lysophospholipase D to release N-acyl ethanolamines. Independent of its catalytic activity, acts as a ligand for integrins. Binds to and activates integrins ITGAV:ITGB3, ITGA4:ITGB1 and ITGA5:ITGB1. Binds to a site (site 2) which is distinct from the classical ligand-binding site (site 1) and induces integrin conformational changes and enhanced ligand binding to site 1. Induces cell proliferation in an integrin-dependent manner. This Cavia porcellus (Guinea pig) protein is Phospholipase A2, membrane associated (PLA2G2A).